Here is a 343-residue protein sequence, read N- to C-terminus: Probable magnesium transporter NIPA4 (343 aa).

Topologically, residues 1-18 are extracellular; sequence MAESSGSWRDSYKGMSSD. A helical membrane pass occupies residues 19 to 39; sequence NIKGLVLALSSSLFIGASFIV. Residues 40–66 are Cytoplasmic-facing; it reads KKKGLKKAASTGTRAGVGGYSYLYEPL. Residues 67–87 form a helical membrane-spanning segment; the sequence is WWIGMTTMLLGEIANFAAYAF. Residues 88 to 90 lie on the Extracellular side of the membrane; it reads APA. The helical transmembrane segment at 91-111 threads the bilayer; that stretch reads ILVTPLGAVSIIISAVLAHII. The Cytoplasmic portion of the chain corresponds to 112-115; sequence LREK. A helical transmembrane segment spans residues 116-136; that stretch reads LHIFGILGCALCVVGSTTIVL. Over 137 to 157 the chain is Extracellular; that stretch reads HAPQEREIDSVIEVWNLATEP. Residues 158 to 178 form a helical membrane-spanning segment; the sequence is AFMFYASLVIGAAVFLIIRFV. Residues 179–189 lie on the Cytoplasmic side of the membrane; the sequence is PQYGQTNVMVY. The chain crosses the membrane as a helical span at residues 190 to 210; the sequence is IGICSLVGSLSVMSVKALGIA. At 211 to 220 the chain is on the extracellular side; the sequence is LKLTFSGTNQ. Residues 221 to 241 form a helical membrane-spanning segment; it reads LFYPQTWIFTLVVLTCVVTQL. Residues 242–254 lie on the Cytoplasmic side of the membrane; that stretch reads NYLNKALDTFNTA. A helical membrane pass occupies residues 255–275; sequence IVSPIYYVMFTSLTILASVIM. Residues 276–283 are Extracellular-facing; that stretch reads FKDWDRQN. The helical transmembrane segment at 284-304 threads the bilayer; it reads GTQIVTEICGFVTILSGTFLL. Residues 305-343 are Cytoplasmic-facing; the sequence is HRTKDMVEGSSVILPLRISKHINEEEGIPLRRQESLRSP.

Belongs to the NIPA (TC 2.A.7) family. In terms of assembly, homodimer.

The protein localises to the cell membrane. Its subcellular location is the early endosome. Functionally, acts as a Mg(2+) transporter. Can also transport other divalent cations such as Fe(2+), Sr(2+), Ba(2+), Mn(2+) and Co(2+) but to a much less extent than Mg(2+). This is Probable magnesium transporter NIPA4 from Arabidopsis thaliana (Mouse-ear cress).